The following is a 274-amino-acid chain: Siroheme biosynthesis protein MET8 (274 aa).

NAD(+) is bound by residues 23–24 (EV), 43–45 (SPD), and F93. Residue D141 is the Proton acceptor of the active site.

Belongs to the precorrin-2 dehydrogenase / sirohydrochlorin ferrochelatase family. MET8 subfamily. As to quaternary structure, homodimer.

It catalyses the reaction precorrin-2 + NAD(+) = sirohydrochlorin + NADH + 2 H(+). The enzyme catalyses siroheme + 2 H(+) = sirohydrochlorin + Fe(2+). Its pathway is porphyrin-containing compound metabolism; siroheme biosynthesis; siroheme from sirohydrochlorin: step 1/1. It functions in the pathway porphyrin-containing compound metabolism; siroheme biosynthesis; sirohydrochlorin from precorrin-2: step 1/1. In terms of biological role, catalyzes the conversion of precorrin-2 into siroheme. This reaction consist of the NAD-dependent oxidation of precorrin-2 into sirohydrochlorin and its subsequent ferrochelation into siroheme. The polypeptide is Siroheme biosynthesis protein MET8 (Saccharomyces cerevisiae (strain ATCC 204508 / S288c) (Baker's yeast)).